Consider the following 1196-residue polypeptide: DNA-directed RNA polymerase I subunit RPA2 (1196 aa).

The C4-type zinc finger occupies 1097–1124; sequence CRECGSILTTQSSVPKIGSMVTIRCRRC.

It belongs to the RNA polymerase beta chain family. In terms of assembly, component of the RNA polymerase I (Pol I) complex consisting of 14 subunits.

It localises to the nucleus. It is found in the nucleolus. It carries out the reaction RNA(n) + a ribonucleoside 5'-triphosphate = RNA(n+1) + diphosphate. Its function is as follows. DNA-dependent RNA polymerase catalyzes the transcription of DNA into RNA using the four ribonucleoside triphosphates as substrates. Second largest core component of RNA polymerase I which synthesizes ribosomal RNA precursors. Proposed to contribute to the polymerase catalytic activity and forms the polymerase active center together with the largest subunit. Pol I is composed of mobile elements and RPA2 is part of the core element with the central large cleft and probably a clamp element that moves to open and close the cleft. This is DNA-directed RNA polymerase I subunit RPA2 (RPA2) from Eremothecium gossypii (strain ATCC 10895 / CBS 109.51 / FGSC 9923 / NRRL Y-1056) (Yeast).